The primary structure comprises 139 residues: Two-component response regulator 24 (139 aa).

One can recognise a Response regulatory domain in the interval 19–134 (TALVVDDSFV…KLLSILHKLN (116 aa)). Aspartate 69 carries the post-translational modification 4-aspartylphosphate.

This sequence belongs to the ARR family. Type-A subfamily. In terms of processing, two-component system major event consists of a His-to-Asp phosphorelay between a sensor histidine kinase (HK) and a response regulator (RR). In plants, the His-to-Asp phosphorelay involves an additional intermediate named Histidine-containing phosphotransfer protein (HPt). This multistep phosphorelay consists of a His-Asp-His-Asp sequential transfer of a phosphate group between first a His and an Asp of the HK protein, followed by the transfer to a conserved His of the HPt protein and finally the transfer to an Asp in the receiver domain of the RR protein. As to expression, mostly expressed in flowers and siliques, primarily restricted to pollen grains.

It is found in the nucleus. Functionally, functions as a response regulator involved in His-to-Asp phosphorelay signal transduction system. Phosphorylation of the Asp residue in the receiver domain activates the ability of the protein to promote the transcription of target genes. Type-A response regulators seem to act as negative regulators of the cytokinin signaling. The chain is Two-component response regulator 24 from Arabidopsis thaliana (Mouse-ear cress).